Consider the following 241-residue polypeptide: Sugar fermentation stimulation protein homolog (241 aa).

It belongs to the SfsA family.

This is Sugar fermentation stimulation protein homolog from Thermosynechococcus vestitus (strain NIES-2133 / IAM M-273 / BP-1).